The chain runs to 96 residues: Non-specific lipid-transfer protein 2 (96 aa).

The N-terminal stretch at 1–27 is a signal peptide; sequence MMRRLAVLVLAVAMVAACGGGVVGVAG. Disulfide bonds link Cys30–Cys62, Cys38–Cys52, Cys53–Cys88, and Cys64–Cys95.

This sequence belongs to the plant LTP family. B11E subfamily.

In terms of biological role, transfer lipids across membranes. May play a role in plant defense or in the biosynthesis of cuticle layers. The chain is Non-specific lipid-transfer protein 2 (LTP-2) from Oryza sativa subsp. indica (Rice).